A 145-amino-acid chain; its full sequence is Aegerolysin Aa-Pri1 (145 aa).

The propeptide occupies 1–8; it reads MDSNKDER.

It belongs to the aegerolysin family.

This is Aegerolysin Aa-Pri1 (AA-PRI1) from Cyclocybe aegerita (Black poplar mushroom).